The chain runs to 720 residues: MAAPVGLVKFWRPGTEGPGVSISEERQSLAENSGTTVVYNPYAALSIEQQRQKLPVFKLRNHILYLIENYQTVVIVGETGCGKSTQIPQYLAEAGWTAEGRVVGVTQPRRVAAVTVAGRVAEERGAVLGHEVGYCIRFDDCTDQLATRIKFLTDGMLVREMMVDPLLTKYSVIMLDEAHERTLYTDIAIGLLKKIQKKRGDLRLIVASATLDADKFRDFFNQNETSDPARDTCVILTVGGRTFPVDIFYLQSPVPDYIKSTVETVVKIHQTEGDGDILAFLTGQEEVETVVSMLIEQARALARTGMKRHLRVLPMYAGLPSFEQMKVFERVSRSVRKVIVATNVAETSITISGIVYVIDCGFVKLRAYNPRTAIECLVVVPVSQASANQRAGRGGRSRSGKCYRLYTEEAFDKLPQSTVPEMQRSNLAPVILQLKALGIDNVLRFHFMSPPPAQSMVQALELLYALGGLDKDCRLTEPLGMRIAEFPLNPMFAKMLLESGNFGCSQEILSIAAMMQIQNIFVVPPNQKSQAIRVHRKFAVEEGDHLTMLNVYEAFIKHNKNSQWCQEHFLNYKGLVRAATVREQLKKLLVKFQVPKKSSEGDPDPVLRCIVSGFFANAARFHSTGAYRTIRDDHELHIHPASVLYAEKPPRWVIYNEVIQTSKYYMRDVTAIESAWLLELAPHFYQQGTQACTLHVGRGRVFISILEHGYLACRDACTCL.

The Helicase ATP-binding domain maps to 64-229; that stretch reads LYLIENYQTV…FNQNETSDPA (166 aa). 77 to 84 is a binding site for ATP; that stretch reads GETGCGKS. Positions 176 to 179 match the DEAH box motif; that stretch reads DEAH. The Helicase C-terminal domain maps to 261–438; the sequence is TVETVVKIHQ…PVILQLKALG (178 aa).

The protein belongs to the DEAD box helicase family. DEAH subfamily. As to quaternary structure, identified in the spliceosome C complex.

It catalyses the reaction ATP + H2O = ADP + phosphate + H(+). May be involved in pre-mRNA splicing. This Pongo abelii (Sumatran orangutan) protein is Probable ATP-dependent RNA helicase DHX35 (DHX35).